We begin with the raw amino-acid sequence, 702 residues long: Ribosomal RNA large subunit methyltransferase K/L (702 aa).

Residues 43-154 (LVYQSLMWSR…KETASIALDL (112 aa)) enclose the THUMP domain.

This sequence belongs to the methyltransferase superfamily. RlmKL family.

The protein resides in the cytoplasm. The enzyme catalyses guanosine(2445) in 23S rRNA + S-adenosyl-L-methionine = N(2)-methylguanosine(2445) in 23S rRNA + S-adenosyl-L-homocysteine + H(+). The catalysed reaction is guanosine(2069) in 23S rRNA + S-adenosyl-L-methionine = N(2)-methylguanosine(2069) in 23S rRNA + S-adenosyl-L-homocysteine + H(+). In terms of biological role, specifically methylates the guanine in position 2445 (m2G2445) and the guanine in position 2069 (m7G2069) of 23S rRNA. The chain is Ribosomal RNA large subunit methyltransferase K/L from Shigella flexneri serotype 5b (strain 8401).